The following is a 510-amino-acid chain: Proline--tRNA ligase (510 aa).

It belongs to the class-II aminoacyl-tRNA synthetase family. ProS type 3 subfamily. In terms of assembly, homodimer.

The protein localises to the cytoplasm. It catalyses the reaction tRNA(Pro) + L-proline + ATP = L-prolyl-tRNA(Pro) + AMP + diphosphate. Catalyzes the attachment of proline to tRNA(Pro) in a two-step reaction: proline is first activated by ATP to form Pro-AMP and then transferred to the acceptor end of tRNA(Pro). This Sphingomonas elodea protein is Proline--tRNA ligase.